Here is a 500-residue protein sequence, read N- to C-terminus: Probable cytosol aminopeptidase (500 aa).

2 residues coordinate Mn(2+): lysine 265 and aspartate 270. The active site involves lysine 277. Mn(2+) is bound by residues aspartate 288, aspartate 347, and glutamate 349. The active site involves arginine 351.

Belongs to the peptidase M17 family. Mn(2+) serves as cofactor.

It localises to the cytoplasm. It catalyses the reaction Release of an N-terminal amino acid, Xaa-|-Yaa-, in which Xaa is preferably Leu, but may be other amino acids including Pro although not Arg or Lys, and Yaa may be Pro. Amino acid amides and methyl esters are also readily hydrolyzed, but rates on arylamides are exceedingly low.. The catalysed reaction is Release of an N-terminal amino acid, preferentially leucine, but not glutamic or aspartic acids.. In terms of biological role, presumably involved in the processing and regular turnover of intracellular proteins. Catalyzes the removal of unsubstituted N-terminal amino acids from various peptides. The protein is Probable cytosol aminopeptidase of Corynebacterium diphtheriae (strain ATCC 700971 / NCTC 13129 / Biotype gravis).